The following is a 254-amino-acid chain: MAVITMKSLLEAGVHFGHQVKRLDPRMKRFIFSERNEIHILDLQKTLQGIKDSYELVQSVIKNGKKVLFVGTKKQASEIIEQEAKRSEMPYVNNRWLGGMLSNFNTIKKSVQKLKKLEKMEVDGTFEMISKKEVSQINREKLKLAKNLTGIKDMEELPGAIFIIDPKREQIVINEARKLGITIIAVVDTNCNPDVIDCPIPGNDDAIRSVALFTKIISDAILESDKEVGIQIVENLNEEDLMSEIEVKNERKES.

Belongs to the universal ribosomal protein uS2 family.

The protein is Small ribosomal subunit protein uS2 of Borrelia recurrentis (strain A1).